A 750-amino-acid polypeptide reads, in one-letter code: Photosystem I P700 chlorophyll a apoprotein A1 (750 aa).

The next 8 membrane-spanning stretches (helical) occupy residues 70 to 93, 156 to 179, 195 to 219, 291 to 309, 346 to 369, 385 to 411, 433 to 455, and 531 to 549; these read IFSA…FHGA, LYCT…FHYH, LNHH…HVSL, IAHH…GHMY, WHAQ…HHMY, LSLF…IFMV, AIIS…LYIH, and FLVH…LILL. 2 residues coordinate [4Fe-4S] cluster: Cys573 and Cys582. 2 consecutive transmembrane segments (helical) span residues 589–610 and 664–686; these read HVFL…HFSW and LSAY…MFLF. His675 lines the chlorophyll a' pocket. Positions 683 and 691 each coordinate chlorophyll a. Trp692 is a binding site for phylloquinone. The helical transmembrane segment at 724–744 threads the bilayer; sequence AVGVTHYLLGGIATTWAFFLA.

Belongs to the PsaA/PsaB family. The PsaA/B heterodimer binds the P700 chlorophyll special pair and subsequent electron acceptors. PSI consists of a core antenna complex that captures photons, and an electron transfer chain that converts photonic excitation into a charge separation. The eukaryotic PSI reaction center is composed of at least 11 subunits. P700 is a chlorophyll a/chlorophyll a' dimer, A0 is one or more chlorophyll a, A1 is one or both phylloquinones and FX is a shared 4Fe-4S iron-sulfur center. serves as cofactor.

Its subcellular location is the plastid. It is found in the chloroplast thylakoid membrane. It catalyses the reaction reduced [plastocyanin] + hnu + oxidized [2Fe-2S]-[ferredoxin] = oxidized [plastocyanin] + reduced [2Fe-2S]-[ferredoxin]. PsaA and PsaB bind P700, the primary electron donor of photosystem I (PSI), as well as the electron acceptors A0, A1 and FX. PSI is a plastocyanin-ferredoxin oxidoreductase, converting photonic excitation into a charge separation, which transfers an electron from the donor P700 chlorophyll pair to the spectroscopically characterized acceptors A0, A1, FX, FA and FB in turn. Oxidized P700 is reduced on the lumenal side of the thylakoid membrane by plastocyanin. In Lotus japonicus (Lotus corniculatus var. japonicus), this protein is Photosystem I P700 chlorophyll a apoprotein A1.